The sequence spans 306 residues: Phenylcoumaran benzylic ether reductase POP1 (306 aa).

Residues 9–15, Arg34, and Lys43 each bind NADP(+); that span reads GGTGYIG. Lys131 (proton acceptor) is an active-site residue. Position 135 (Arg135) interacts with NADP(+).

The protein belongs to the NmrA-type oxidoreductase family. Isoflavone reductase subfamily.

The catalysed reaction is (-)-dehydrodiconiferyl alcohol + NADPH + H(+) = (S)-isodihydrodehydrodiconiferyl alcohol + NADP(+). It catalyses the reaction (+)-dehydrodiconiferyl alcohol + NADPH + H(+) = (R)-isodihydrodehydrodiconiferyl alcohol + NADP(+). It carries out the reaction (2R,3S)-dihydrodehydrodiconiferyl alcohol + NADPH + H(+) = (S)-tetrahydrodehydrodiconiferyl alcohol + NADP(+). The enzyme catalyses (2S,3R)-dihydrodehydrodiconiferyl alcohol + NADPH + H(+) = (R)-tetrahydrodehydrodiconiferyl alcohol + NADP(+). Its function is as follows. Oxidoreductase involved in lignan biosynthesis. Catalyzes the NADPH-dependent reduction of phenylcoumaran benzylic ethers. Converts dehydrodiconiferyl alcohol (DDC) to isodihydrodehydrodiconiferyl alcohol (IDDDC), and dihydrodehydrodiconiferyl alcohol (DDDC) to tetrahydrodehydrodiconiferyl alcohol (TDDC). This Populus trichocarpa (Western balsam poplar) protein is Phenylcoumaran benzylic ether reductase POP1.